A 598-amino-acid chain; its full sequence is MEPVSTGAEAGMEGAGGDPYRRPARRTQWLLSALAHHYGLDRGVENEIVVLATGLDQYLQEVFHHLDCRGAGRLPRADFRALCAVLGLRAEGATTAGQAAGDGNSRDVTPGDAAAELATDGDSDTDEEARLALRAEPPELTFRQFHARLCGYFGTRAGPRLPRGALSEHIETQIRLRRPRRRRRPPCAPGPDSGPDCERVARLEEENSSLRELVEDLRAALQSSDARCLALQVGLWKSQASTHEMGHGGPEAAVRELRQAQGALAAAEARAGRLRRGQAEVRRRAEEARQVVLRSLHRVRELEALAQQVPGLQRWVRRLEAELQRYRSEDSQLPTPQLANPEPGDKSNEPEDAGTRDPDPTPEGAWQSDSSSGSRALDEVDEQLFRSVEGQAASDEEEVEEERWQEEKKTPAAEAKTLLARLSSCRGRCDDQTAEKLMTYFGHFGGANHAHTLGELEACIAMLVEQLRTQGCGGRTLGTSEEEAELQQKVEENEHLRLELQMVETERVRLSLLEEKLVDVLQLLQRLRDLNISKRALGKILLSTLDAFRDPTHEGRPSPAAILDALHQALAACQLLRRQPSAPASAAAALTNPLLVSC.

A disordered region spans residues 1–22 (MEPVSTGAEAGMEGAGGDPYRR). Residues 54–89 (GLDQYLQEVFHHLDCRGAGRLPRADFRALCAVLGLR) enclose the EF-hand domain. Disordered regions lie at residues 96-127 (AGQAAGDGNSRDVTPGDAAAELATDGDSDTDE), 175-198 (RLRRPRRRRRPPCAPGPDSGPDCE), and 326-411 (YRSE…KKTP). Residues 175–185 (RLRRPRRRRRP) are compositionally biased toward basic residues. Positions 196-303 (DCERVARLEE…RSLHRVRELE (108 aa)) form a coiled coil. The segment covering 343-359 (PGDKSNEPEDAGTRDPD) has biased composition (basic and acidic residues). Residues 394 to 404 (SDEEEVEEERW) are compositionally biased toward acidic residues. A coiled-coil region spans residues 479–533 (TSEEEAELQQKVEENEHLRLELQMVETERVRLSLLEEKLVDVLQLLQRLRDLNIS).

The polypeptide is EF-hand and coiled-coil domain-containing protein 1 (EFCC1) (Homo sapiens (Human)).